The sequence spans 21 residues: M-lycotoxin-Ls4a (21 aa).

Position 21 is a leucine amide (leucine 21).

Expressed by the venom gland.

The protein resides in the secreted. Its function is as follows. May inhibit growth of bacteria. This chain is M-lycotoxin-Ls4a, found in Lycosa singoriensis (Wolf spider).